The sequence spans 205 residues: Dephospho-CoA kinase (205 aa).

The DPCK domain maps to 5 to 201 (VVGLTGGIGS…QRYLQLSGNH (197 aa)). 13-18 (GSGKTT) is an ATP binding site.

It belongs to the CoaE family.

Its subcellular location is the cytoplasm. The enzyme catalyses 3'-dephospho-CoA + ATP = ADP + CoA + H(+). The protein operates within cofactor biosynthesis; coenzyme A biosynthesis; CoA from (R)-pantothenate: step 5/5. In terms of biological role, catalyzes the phosphorylation of the 3'-hydroxyl group of dephosphocoenzyme A to form coenzyme A. The protein is Dephospho-CoA kinase of Shewanella oneidensis (strain ATCC 700550 / JCM 31522 / CIP 106686 / LMG 19005 / NCIMB 14063 / MR-1).